A 227-amino-acid polypeptide reads, in one-letter code: Apoptosis regulator OPG045 (227 aa).

Belongs to the orthopoxvirus OPG045 family. As to quaternary structure, homodimer. Interacts with host pro-apoptotic protein BCL2L11 (via BH3 domain). Interacts with host NLRP1. Interacts with host BAK.

The protein resides in the host mitochondrion outer membrane. It is found in the host cytoplasm. Its function is as follows. Plays a role in evading host innate immune response by inhibiting host inflammasome activation. Interacts with and inhibits NLR-mediated interleukin-1 beta/IL1B production in infected cells. At the host mitochondria outer membrane, interacts with the BH3 domain of host BAK and prevents BAK from binding active BAX. In turn, host apoptosis is inhibited. In Oryctolagus cuniculus (Rabbit), this protein is Apoptosis regulator OPG045 (OPG045).